The primary structure comprises 476 residues: Bifunctional protein HldE (476 aa).

Positions 1 to 319 are ribokinase; the sequence is MKVSLPAFEK…EALALHHGES (319 aa). 195-198 is an ATP binding site; that stretch reads NMSE. D264 is a catalytic residue. Positions 345–476 are cytidylyltransferase; the sequence is MTNGCFDILH…AIIQNIMANQ (132 aa).

This sequence in the N-terminal section; belongs to the carbohydrate kinase PfkB family. The protein in the C-terminal section; belongs to the cytidylyltransferase family. Homodimer.

It carries out the reaction D-glycero-beta-D-manno-heptose 7-phosphate + ATP = D-glycero-beta-D-manno-heptose 1,7-bisphosphate + ADP + H(+). The catalysed reaction is D-glycero-beta-D-manno-heptose 1-phosphate + ATP + H(+) = ADP-D-glycero-beta-D-manno-heptose + diphosphate. It participates in nucleotide-sugar biosynthesis; ADP-L-glycero-beta-D-manno-heptose biosynthesis; ADP-L-glycero-beta-D-manno-heptose from D-glycero-beta-D-manno-heptose 7-phosphate: step 1/4. The protein operates within nucleotide-sugar biosynthesis; ADP-L-glycero-beta-D-manno-heptose biosynthesis; ADP-L-glycero-beta-D-manno-heptose from D-glycero-beta-D-manno-heptose 7-phosphate: step 3/4. Functionally, catalyzes the phosphorylation of D-glycero-D-manno-heptose 7-phosphate at the C-1 position to selectively form D-glycero-beta-D-manno-heptose-1,7-bisphosphate. In terms of biological role, catalyzes the ADP transfer from ATP to D-glycero-beta-D-manno-heptose 1-phosphate, yielding ADP-D-glycero-beta-D-manno-heptose. This is Bifunctional protein HldE from Shewanella baltica (strain OS195).